The sequence spans 292 residues: Phosphoribulokinase, plasmid (292 aa).

12 to 20 (GSSGAGTTS) contacts ATP.

Belongs to the phosphoribulokinase family. In terms of assembly, homooctamer.

The catalysed reaction is D-ribulose 5-phosphate + ATP = D-ribulose 1,5-bisphosphate + ADP + H(+). The protein operates within carbohydrate biosynthesis; Calvin cycle. In Cupriavidus necator (strain ATCC 17699 / DSM 428 / KCTC 22496 / NCIMB 10442 / H16 / Stanier 337) (Ralstonia eutropha), this protein is Phosphoribulokinase, plasmid (cfxP).